Consider the following 132-residue polypeptide: MSGLKNSGKKAVDAILNPQKIDVAFQKFTRPTVAAGKTTFPTSQRDLKNIGFHFDLADHTRQVPDTRPNAKPGATRTANVFHWQAAAEAESKSIKDWIRKNGSHAVIQTLEVPVDATKEEFEDILKTAAKKL.

In terms of biological role, part of the subtelomeric hrmA-associated cluster (HAC) containing genes that alter the hyphal surface (such as reduced total chitin or increased beta-glucan exposure) and perturb inter-hyphal interactions within the developing biofilms, resulting in a loss of vertically aligned polarized growing filaments. Consequently, this hypoxia-typic morphotype (called H-MORPH) with altered biofilm architecture leads to increased hypoxia fitness, increased host inflammation, rapid disease progression, and mortality in a murine model of invasive aspergillosis. This is Subtelomeric hrmA-associated cluster protein AFUB_079000 from Aspergillus fumigatus (strain CBS 144.89 / FGSC A1163 / CEA10) (Neosartorya fumigata).